We begin with the raw amino-acid sequence, 98 residues long: NADH-ubiquinone oxidoreductase chain 4L (98 aa).

3 helical membrane-spanning segments follow: residues 1 to 21 (MSLVHMNVIVAFTLSLVGLLM), 29 to 49 (ALLCMEGMMLSLFVLAALTIL), and 61 to 81 (IILLVFAACEAAIGLALLVTI).

It belongs to the complex I subunit 4L family. In terms of assembly, core subunit of respiratory chain NADH dehydrogenase (Complex I) which is composed of 45 different subunits.

Its subcellular location is the mitochondrion inner membrane. The catalysed reaction is a ubiquinone + NADH + 5 H(+)(in) = a ubiquinol + NAD(+) + 4 H(+)(out). Its function is as follows. Core subunit of the mitochondrial membrane respiratory chain NADH dehydrogenase (Complex I) which catalyzes electron transfer from NADH through the respiratory chain, using ubiquinone as an electron acceptor. Part of the enzyme membrane arm which is embedded in the lipid bilayer and involved in proton translocation. This is NADH-ubiquinone oxidoreductase chain 4L (MT-ND4L) from Ziphius cavirostris (Cuvier's beaked whale).